A 377-amino-acid chain; its full sequence is Protein-arginine rhamnosyltransferase (377 aa).

Y15 is a dTDP-beta-L-rhamnose binding site. The active-site Proton acceptor is the D17. DTDP-beta-L-rhamnose contacts are provided by residues Y193, Q255, and 271 to 275; that span reads RGEDS. E273 is an active-site residue.

The protein belongs to the glycosyltransferase 104 family.

It carries out the reaction dTDP-beta-L-rhamnose + L-arginyl-[protein] = N(omega)-(alpha-L-rhamnosyl)-L-arginyl-[protein] + dTDP + H(+). Its function is as follows. Protein-arginine rhamnosyltransferase that catalyzes the transfer of a single rhamnose to elongation factor P (EF-P) on 'Lys-32', a modification required for EF-P-dependent rescue of polyproline stalled ribosomes. This chain is Protein-arginine rhamnosyltransferase, found in Pseudomonas putida (strain ATCC 47054 / DSM 6125 / CFBP 8728 / NCIMB 11950 / KT2440).